The sequence spans 265 residues: Undecaprenyl-diphosphatase 1 (265 aa).

7 helical membrane-spanning segments follow: residues 4–24 (IITAFILGIVEGLAEFLPISS), 42–62 (AKTFEIVIQLGAILAIAILYH), 84–104 (FHVFLGVFPAVVAGLLLHDVI), 108–128 (LFQPYTVVIGLVAGAILMIFA), 184–204 (SEFSFLIALPVMVGATGLDLL), 217–237 (MFAVGFITSFIVAMLAVVTFL), and 245–265 (LKPFAYYRILLAILFTVFVLL).

It belongs to the UppP family.

It is found in the cell membrane. The enzyme catalyses di-trans,octa-cis-undecaprenyl diphosphate + H2O = di-trans,octa-cis-undecaprenyl phosphate + phosphate + H(+). Catalyzes the dephosphorylation of undecaprenyl diphosphate (UPP). Confers resistance to bacitracin. The protein is Undecaprenyl-diphosphatase 1 of Bacillus anthracis.